The following is a 466-amino-acid chain: Glutamate decarboxylase (466 aa).

K277 bears the N6-(pyridoxal phosphate)lysine mark.

This sequence belongs to the group II decarboxylase family. It depends on pyridoxal 5'-phosphate as a cofactor.

The enzyme catalyses L-glutamate + H(+) = 4-aminobutanoate + CO2. In terms of biological role, converts internalized glutamate to GABA and increases the internal pH. Involved in glutamate-dependent acid resistance. The chain is Glutamate decarboxylase (gadB) from Lactococcus lactis subsp. cremoris (strain MG1363).